We begin with the raw amino-acid sequence, 556 residues long: Jerky protein homolog (556 aa).

Positions 11–62 (RGEKRKRVVLTLKEKIDICTRLEKGESRKALMQEYNVGMSTLYDIRAHKAQL) constitute an HTH psq-type domain. 2 DNA-binding regions (H-T-H motif) span residues 38-58 (RKALMQEYNVGMSTLYDIRAH) and 110-142 (PMLIEKAKDFYEQMQLTEPCVFSGGWLWRFKAR). Positions 77-149 (QRRTLHTPKL…KARHGIKKLD (73 aa)) constitute an HTH CENPB-type domain. Residues 213-382 (KDRLTVLMCA…VPSHVFRRAW (170 aa)) form the DDE-1 domain. Residue serine 414 is modified to Phosphoserine. The tract at residues 439 to 482 (SWGVAGREAEGGRPPAATSPAEVVWSSEKTPKADQDGRGDPGEG) is disordered. Over residues 467 to 479 (KTPKADQDGRGDP) the composition is skewed to basic and acidic residues.

This sequence belongs to the tigger transposable element derived protein family. As to expression, expressed ubiquitously.

The protein resides in the nucleus. Functionally, may bind DNA. This Homo sapiens (Human) protein is Jerky protein homolog.